Reading from the N-terminus, the 79-residue chain is Small ribosomal subunit protein bS21A (79 aa).

Positions L57–R79 are disordered.

Belongs to the bacterial ribosomal protein bS21 family.

In Rhizobium johnstonii (strain DSM 114642 / LMG 32736 / 3841) (Rhizobium leguminosarum bv. viciae), this protein is Small ribosomal subunit protein bS21A.